The chain runs to 356 residues: Histidinol-phosphate aminotransferase (356 aa).

Lys214 is modified (N6-(pyridoxal phosphate)lysine).

The protein belongs to the class-II pyridoxal-phosphate-dependent aminotransferase family. Histidinol-phosphate aminotransferase subfamily. In terms of assembly, homodimer. Pyridoxal 5'-phosphate is required as a cofactor.

It catalyses the reaction L-histidinol phosphate + 2-oxoglutarate = 3-(imidazol-4-yl)-2-oxopropyl phosphate + L-glutamate. It participates in amino-acid biosynthesis; L-histidine biosynthesis; L-histidine from 5-phospho-alpha-D-ribose 1-diphosphate: step 7/9. The sequence is that of Histidinol-phosphate aminotransferase from Shigella dysenteriae serotype 1 (strain Sd197).